A 412-amino-acid polypeptide reads, in one-letter code: Delta-aminolevulinic acid dehydratase, chloroplastic (412 aa).

A chloroplast-targeting transit peptide spans 1–48; sequence MASSIPNAPSAFNSQSYVGLRAPLRTFNFSSPQAAKIPRSQRLFVVRA. Residues 68-101 form a disordered region; sequence VRPRPAAPVGTPVVPSLPLHRRPRRNRKSPALRS. Positions 86-97 are enriched in basic residues; sequence LHRRPRRNRKSP. Catalysis depends on K280, which acts as the Schiff-base intermediate with substrate. 5-aminolevulinate-binding residues include R290 and K302. Residue E318 coordinates Mg(2+). The active-site Schiff-base intermediate with substrate is the K333. The 5-aminolevulinate site is built by S359 and Y398.

It belongs to the ALAD family. Homooctamer. Mg(2+) serves as cofactor. In terms of tissue distribution, leaves and root nodules.

It localises to the plastid. It is found in the chloroplast. The catalysed reaction is 2 5-aminolevulinate = porphobilinogen + 2 H2O + H(+). Its pathway is porphyrin-containing compound metabolism; protoporphyrin-IX biosynthesis; coproporphyrinogen-III from 5-aminolevulinate: step 1/4. Functionally, is committed to plant tetrapyrrole synthesis. Catalyzes an early step in the biosynthesis of tetrapyrroles. Binds two molecules of 5-aminolevulinate per subunit, each at a distinct site, and catalyzes their condensation to form porphobilinogen. The chain is Delta-aminolevulinic acid dehydratase, chloroplastic (HEMB) from Glycine max (Soybean).